A 193-amino-acid polypeptide reads, in one-letter code: Interferon type A3 (193 aa).

Positions Met1 to Ala31 are cleaved as a signal peptide. Intrachain disulfides connect Cys32-Cys129, Cys61-Cys155, and Cys68-Cys168. N-linked (GlcNAc...) asparagine glycans are attached at residues Asn65, Asn71, Asn108, and Asn186.

The protein belongs to the alpha/beta interferon family.

The protein localises to the secreted. Its function is as follows. Has antiviral activities. This Gallus gallus (Chicken) protein is Interferon type A3 (IFNA3).